We begin with the raw amino-acid sequence, 361 residues long: P2Y purinoceptor 4 (361 aa).

The interval 1-20 is disordered; the sequence is MTSAESLLFTSLGPSPSSGD. Over 1 to 30 the chain is Extracellular; sequence MTSAESLLFTSLGPSPSSGDGDCRFNEEFK. Residues 31–58 form a helical membrane-spanning segment; sequence FILLPMSYAVVFVLGLALNAPTLWLFLF. The Cytoplasmic portion of the chain corresponds to 59-68; the sequence is RLRPWDATAT. A helical transmembrane segment spans residues 69 to 91; it reads YMFHLALSDTLYVLSLPTLVYYY. Residues 92 to 108 lie on the Extracellular side of the membrane; that stretch reads AARNHWPFGTGLCKFVR. Cysteines 104 and 181 form a disulfide. The chain crosses the membrane as a helical span at residues 109–127; the sequence is FLFYWNLYCSVLFLTCISV. Residues 128-149 are Cytoplasmic-facing; it reads HRYLGICHPLRAIRWGRPRFAS. The chain crosses the membrane as a helical span at residues 150-170; that stretch reads LLCLGVWLVVAGCLVPNLFFV. At 171 to 192 the chain is on the extracellular side; that stretch reads TTNANGTTILCHDTTLPEEFDH. N-linked (GlcNAc...) asparagine glycosylation is present at Asn-175. A helical transmembrane segment spans residues 193–218; it reads YVYFSSAVMVLLFGLPFLITLVCYGL. The Cytoplasmic segment spans residues 219–242; that stretch reads MARRLYRPLPGAGQSSSRLRSLRT. Residues 243 to 265 traverse the membrane as a helical segment; sequence IAVVLTVFAVCFVPFHITRTIYY. Topologically, residues 266–283 are extracellular; sequence QARLLQADCHVLNIVNVV. A helical transmembrane segment spans residues 284-305; it reads YKVTRPLASANSCLDPVLYLFT. Residues 306–361 lie on the Cytoplasmic side of the membrane; it reads GDKYRNQLQQLCRGSKPKPRTAASSLALVTLHEESISRWADTHQDSTFSAYEGDRL.

Belongs to the G-protein coupled receptor 1 family. Post-translationally, phosphorylation of Ser-329 and Ser-330 is a key step in agonist-dependent desensitization and loss of surface P2RY4. This phosphorylation does not involve PKC, nor other calcium-activated kinases. Widely expressed at low levels. In brain, higher expression in the pineal gland and ventricular system.

It is found in the cell membrane. Receptor for ATP and UTP coupled to G-proteins that activate a phosphatidylinositol-calcium second messenger system. Not activated by ADP or UDP. This is P2Y purinoceptor 4 (P2ry4) from Rattus norvegicus (Rat).